We begin with the raw amino-acid sequence, 140 residues long: FLYWCH family member 2 (140 aa).

Disordered stretches follow at residues Met-1–Phe-39 and His-84–Leu-140. Ser-21 carries the post-translational modification Phosphoserine. Basic and acidic residues predominate over residues Pro-98 to Asp-114. Low complexity predominate over residues Ala-118 to Glu-127.

The sequence is that of FLYWCH family member 2 (FLYWCH2) from Homo sapiens (Human).